Reading from the N-terminus, the 238-residue chain is ASEDGGRGPYVQADLAYAYEHITHDYPEPTAPNKNKISTVSDYFRNIRTRSVHPRVSVGYDFGGWRIAADYARYRKWNNNKYSVNIENVRIRKENGIRIDRKTENQENGTFHAVSSLGLSAIYDFQINDKFKPYIGARVAYGHVRHSIDSTKKTIEVTTVPSNAPNGAVTTYNTDPKTQNDYQSNSIRRVGLGVIAGVGFDITPKLTLDAGYRYHNWGRLENTRFKTHEASLGVRYRF.

Ala-1 is a signal peptide.

The protein belongs to the opacity porin family.

The protein localises to the cell outer membrane. Its function is as follows. Implicated in a number of adherence functions. OPA proteins are implicated in pathogenesis and are subject to phase variation. This Neisseria gonorrhoeae protein is Opacity protein opA60 (opaH).